We begin with the raw amino-acid sequence, 1185 residues long: METQDTLTMIDLTSSVPSLSLSNVIQQQNEVIESENKNVNTELLTLSTQTVISFVYCNRQASLFNLLTQMLTTNTFSPINPSVEIPFQPSPYPSTIHNNSSTSINQSSSPSSSSSTTPSSSTQSSPILQGNNNNITGKPSLMFNILDKAINAISHQYKKNFYIHILEKPISSPNLISTNPNNNSNNNNNNNNNTAEDHDKLVAGCLSFINHMLSSAPSYFDFERYRQVLSSQGVNEVIKTFVKSVNPNVRLELLHYQKHKINGIKASKQTSIFLDRQNVLSFLNRLCKMSFPNNGGDSPTTNEEKMKLLGFETDDLHLELQSTGLLGIRNMIYFCARYFRIYDEILKAQIKKFKEININNNNNSNNNDENNNNNNNNNNNNNNNNNNNNNNNNNSDNVENNNNNNVENEDDSYYSFSRVGFTLTNLIFELYIEDENLYEIIFDQDDWFEELFCISFELFDEIWEREGTCQEDYIPVLHKTRAVLSRIKWTNPSSIASFQKTLGCVLDEMWSKTNDLKEEKEMNARAGGLSDSIMGVPHGNANGGSGASGNLRFKKFFNEKFKQYRKSTDSINSDGSEAIFQPPPQSPQSQQQSQQQTQQTQQPASPLQTSSSSDIQKSPVPHKINTKSMSFKKLFSDLKSAETERKNSLTGSNGITDGGDSNPNSGAEVLSLPNTPRYLGGDNDNEGSENGSSSSFSFEKLSRKLRSGSSSIKDKSSSPKFNSLTGELTMNISSSSSLEGNQQQQQQQSTNSSTTSPNVSPYLQSVTTTTTNTTTATTTTDDQSQQQVPPQFNIDDGKRSLKSSGNSIYKSVKKAMSNLGEKGKDIGKKVKSKKEKKKKSKQQVEHSFEDDCNNSANNSSYNNSPYIIPGDLELPTNFRPSLDLDFDKNSDSSYEDSENETNTLDDIQSIDSSSNNNSNNNSNNNSSSNLNNNSTSSINLMNDQSLQSVQQPQPQQQQQQQQQQQQPIVEQQPQANLEKEQNNSSTQVTPIISSAKLDVNEKLESIPTVIIEPIDDDNNNNGINRSISDQSLTDAMSLNYQITQKQKSRLSTDENQNQNNNNNKLSDNSSNEQHPVSPSYPRRQINIINGGGGSAGRNSTLNSGSSSLSKKPVLSRAPIPSVFSSSSHNPPAMVKSPSIKHLVTFFEVKSSELKDNSSTVSGSVNNNLNVGIPQLKREKSFKSDF.

Disordered regions lie at residues 88 to 133 (QPSP…GNNN), 176 to 196 (ISTNPNNNSNNNNNNNNNTAE), 361 to 409 (NNNS…VENE), 566 to 628 (KSTD…NTKS), 642 to 805 (ETER…KSSG), 819 to 868 (LGEK…PYII), 883 to 989 (DLDF…TQVT), and 1044 to 1114 (QKQK…KPVL). Composition is skewed to low complexity over residues 94-127 (STIHNNSSTSINQSSSPSSSSSTTPSSSTQSSPI), 176-194 (ISTNPNNNSNNNNNNNNNT), 361-406 (NNNS…NNNV), and 587-613 (PQSQQQSQQQTQQTQQPASPLQTSSSS). In terms of domain architecture, ELMO spans 275 to 488 (DRQNVLSFLN…KTRAVLSRIK (214 aa)). A compositionally biased stretch (polar residues) spans 648–665 (SLTGSNGITDGGDSNPNS). The segment covering 688 to 699 (SENGSSSSFSFE) has biased composition (low complexity). The span at 721–732 (FNSLTGELTMNI) shows a compositional bias: polar residues. 2 stretches are compositionally biased toward low complexity: residues 733-760 (SSSSSLEGNQQQQQQQSTNSSTTSPNVS) and 767-780 (TTTTTNTTTATTTT). Residues 781-790 (DDQSQQQVPP) show a composition bias toward polar residues. Over residues 829–841 (KVKSKKEKKKKSK) the composition is skewed to basic residues. Low complexity-rich tracts occupy residues 853–864 (NNSANNSSYNNS), 912–974 (SSSN…QQPQ), 1053–1072 (DENQNQNNNNNKLSDNSSNE), and 1096–1109 (GRNSTLNSGSSSLS).

The chain is ELMO domain-containing protein F (elmoF) from Dictyostelium discoideum (Social amoeba).